The primary structure comprises 272 residues: Large ribosomal subunit protein uL2 (272 aa).

The tract at residues 247–272 is disordered; the sequence is PWGQPCKGFKTRNNKRTNSSIIKRRK. Residues 262–272 are compositionally biased toward polar residues; sequence RTNSSIIKRRK.

This sequence belongs to the universal ribosomal protein uL2 family. Part of the 50S ribosomal subunit. Forms a bridge to the 30S subunit in the 70S ribosome.

One of the primary rRNA binding proteins. Required for association of the 30S and 50S subunits to form the 70S ribosome, for tRNA binding and peptide bond formation. It has been suggested to have peptidyltransferase activity; this is somewhat controversial. Makes several contacts with the 16S rRNA in the 70S ribosome. The chain is Large ribosomal subunit protein uL2 from Bdellovibrio bacteriovorus (strain ATCC 15356 / DSM 50701 / NCIMB 9529 / HD100).